The following is a 391-amino-acid chain: DNA repair protein NreB (391 aa).

Residues 3–17 (CIECRGRMLCSRKVC) form a C4-type zinc finger. A PIP motif motif is present at residues 384–391 (QRTLWEFM).

This sequence belongs to the Nre family. In terms of assembly, interacts with the DNA polymerase sliding clamp (PCNA) via the PIP (PCNA-interacting peptide) motif.

Involved in DNA damage repair. This is DNA repair protein NreB from Archaeoglobus fulgidus (strain ATCC 49558 / DSM 4304 / JCM 9628 / NBRC 100126 / VC-16).